We begin with the raw amino-acid sequence, 277 residues long: MSVINVGQAVVLGAVEGVTEFLPVSSTGHLKITEGLMGIPVDDNAVVGFSAVIQVGAIAAVLVYFFKDIVRIVSAWGRGLRNRDERHHHDYKFAWWVIYATIPIVIVGLAAKSLIEGPLASLWVVAASLIVGSGVMWAADQMGRHKRGEDDTSFKDAMLVGSSQILALLFPGFSRSGATMSTALILDLDRVAATRLSFFLGIPALTGAGLYELKDALGTGVGVAPLAVGTIVSFVVAYGSISWLLKFVAKHSFNAFVIYRIVIGVLLLGLLGTGVLS.

7 consecutive transmembrane segments (helical) span residues 46–66 (VVGF…VYFF), 95–115 (WWVI…KSLI), 119–139 (LASL…MWAA), 165–185 (ILAL…TALI), 191–211 (VAAT…AGLY), 216–236 (ALGT…SFVV), and 256–276 (FVIY…TGVL).

Belongs to the UppP family.

The protein localises to the cell membrane. It catalyses the reaction di-trans,octa-cis-undecaprenyl diphosphate + H2O = di-trans,octa-cis-undecaprenyl phosphate + phosphate + H(+). Catalyzes the dephosphorylation of undecaprenyl diphosphate (UPP). Confers resistance to bacitracin. The protein is Undecaprenyl-diphosphatase 1 of Streptomyces avermitilis (strain ATCC 31267 / DSM 46492 / JCM 5070 / NBRC 14893 / NCIMB 12804 / NRRL 8165 / MA-4680).